A 158-amino-acid chain; its full sequence is Transcriptional repressor NrdR (158 aa).

The segment at 3–34 (CPFCSFPESRVLDSRPADEGNSIRRRRECGEC) is a zinc-finger region. One can recognise an ATP-cone domain in the interval 49–139 (LVVVKKDGRR…VYRQFGDIYS (91 aa)).

It belongs to the NrdR family. It depends on Zn(2+) as a cofactor.

Functionally, negatively regulates transcription of bacterial ribonucleotide reductase nrd genes and operons by binding to NrdR-boxes. This Desulforamulus reducens (strain ATCC BAA-1160 / DSM 100696 / MI-1) (Desulfotomaculum reducens) protein is Transcriptional repressor NrdR.